Here is an 86-residue protein sequence, read N- to C-terminus: Putative membrane protein insertion efficiency factor (86 aa).

Belongs to the UPF0161 family.

The protein localises to the cell inner membrane. Functionally, could be involved in insertion of integral membrane proteins into the membrane. In Mannheimia succiniciproducens (strain KCTC 0769BP / MBEL55E), this protein is Putative membrane protein insertion efficiency factor.